The following is a 378-amino-acid chain: Putative glutamate--cysteine ligase 2 (378 aa).

Belongs to the glutamate--cysteine ligase type 2 family. YbdK subfamily.

The enzyme catalyses L-cysteine + L-glutamate + ATP = gamma-L-glutamyl-L-cysteine + ADP + phosphate + H(+). In terms of biological role, ATP-dependent carboxylate-amine ligase which exhibits weak glutamate--cysteine ligase activity. The chain is Putative glutamate--cysteine ligase 2 from Salinispora arenicola (strain CNS-205).